A 380-amino-acid polypeptide reads, in one-letter code: Cytochrome b (380 aa).

A run of 4 helical transmembrane segments spans residues 34–54 (FGSL…FLAM), 78–99 (WLLR…YFHI), 114–134 (WNIG…GYVL), and 179–199 (FFTF…IHLL). Heme b is bound by residues His84 and His98. His197 is a binding site for heme b. Residue His202 participates in a ubiquinone binding. 4 helical membrane-spanning segments follow: residues 227 to 247 (FKDL…STFA), 289 to 309 (LGGV…PITH), 321 to 341 (TAKA…WIGG), and 348 to 368 (FISI…LIIP).

It belongs to the cytochrome b family. In terms of assembly, the cytochrome bc1 complex contains 3 respiratory subunits (MT-CYB, CYC1 and UQCRFS1), 2 core proteins (UQCRC1 and UQCRC2) and probably 6 low-molecular weight proteins. Heme b is required as a cofactor.

It localises to the mitochondrion inner membrane. Functionally, component of the ubiquinol-cytochrome c reductase complex (complex III or cytochrome b-c1 complex) that is part of the mitochondrial respiratory chain. The b-c1 complex mediates electron transfer from ubiquinol to cytochrome c. Contributes to the generation of a proton gradient across the mitochondrial membrane that is then used for ATP synthesis. This is Cytochrome b (mt-cyb) from Glandirana rugosa (Japanese wrinkled frog).